We begin with the raw amino-acid sequence, 609 residues long: Meiotically up-regulated gene 28 protein (609 aa).

RRM domains lie at 20–103 and 419–499; these read ISIY…YTHI and CNLF…YAEK.

The protein resides in the cytoplasm. Functionally, has a role in sporulation. The polypeptide is Meiotically up-regulated gene 28 protein (mug28) (Schizosaccharomyces pombe (strain 972 / ATCC 24843) (Fission yeast)).